We begin with the raw amino-acid sequence, 439 residues long: Trigger factor (439 aa).

The region spanning 175–260 (GDRVTISYRS…VERLSVKDEI (86 aa)) is the PPIase FKBP-type domain.

The protein belongs to the FKBP-type PPIase family. Tig subfamily.

It is found in the cytoplasm. The enzyme catalyses [protein]-peptidylproline (omega=180) = [protein]-peptidylproline (omega=0). Its function is as follows. Involved in protein export. Acts as a chaperone by maintaining the newly synthesized protein in an open conformation. Functions as a peptidyl-prolyl cis-trans isomerase. The chain is Trigger factor from Anaplasma phagocytophilum (strain HZ).